A 399-amino-acid polypeptide reads, in one-letter code: Centrosomal protein 43 (399 aa).

In terms of domain architecture, LisH spans 70–102; sequence DGRLVASLVAEFLQFFNLDFTLAVFQPETSTFQ. Thr-143 carries the phosphothreonine modification. The tract at residues 143-311 is disordered; that stretch reads TSGEGALDLS…LKESESKRGN (169 aa). 4 positions are modified to phosphoserine: Ser-152, Ser-156, Ser-160, and Ser-202. Residues 197–209 show a composition bias toward low complexity; that stretch reads NDASHSDTSISSS. Acidic residues predominate over residues 245 to 256; it reads PEEDDLEGDSFF. Over residues 286 to 302 the composition is skewed to low complexity; it reads APPLKSGLSSLAGAPSL. 2 positions are modified to phosphoserine: Ser-301 and Ser-326. The disordered stretch occupies residues 328-357; sequence GLGTGEEDDYVDDFNSTSHRSEKSELSIGE. The residue at position 337 (Tyr-337) is a Phosphotyrosine.

Belongs to the CEP43 family. In terms of assembly, homodimer. Part of a ternary complex that contains CEP350, CEP43 and MAPRE1. Interacts directly with CEP350 and MAPRE1. Interacts with CEP19. Interacts (via N-terminus) with CEP350 (via C-terminus).

Its subcellular location is the cytoplasm. It localises to the cytoskeleton. It is found in the microtubule organizing center. The protein resides in the centrosome. The protein localises to the centriole. Its subcellular location is the cilium basal body. Functionally, required for anchoring microtubules to the centrosomes. Required for ciliation. The protein is Centrosomal protein 43 (CEP43) of Bos taurus (Bovine).